The primary structure comprises 75 residues: Protein RegB (75 aa).

In terms of biological role, required for optimal exotoxin A production. This is Protein RegB (regB) from Pseudomonas aeruginosa (strain ATCC 15692 / DSM 22644 / CIP 104116 / JCM 14847 / LMG 12228 / 1C / PRS 101 / PAO1).